Reading from the N-terminus, the 782-residue chain is Protein phosphatase 1 regulatory subunit 12C (782 aa).

The segment covering 1-17 (MSGEDGPAAGPGAAAAA) has biased composition (low complexity). The tract at residues 1–43 (MSGEDGPAAGPGAAAAAARERRREQLRQWGARAGAEPGPGERR) is disordered. Ser-2 carries the N-acetylserine modification. ANK repeat units lie at residues 100 to 129 (DGIS…TVNQ), 133 to 162 (EGWT…NIAA), 226 to 255 (TGAS…DPEL), and 259 to 288 (DGWT…GMDS). Residues 297–329 (CDLADEEVLSLLEELARKQEDLRNQKEASQSRG) adopt a coiled-coil conformation. Residues 316-686 (EDLRNQKEAS…EEPDGGFRTL (371 aa)) form a disordered region. A compositionally biased stretch (polar residues) spans 323–337 (EASQSRGQEPQAPSS). The span at 349 to 365 (SSREKISLQDLSKERRP) shows a compositional bias: basic and acidic residues. The segment covering 374-383 (QDEDEGEEGP) has biased composition (acidic residues). Residues Ser-399, Ser-407, Ser-427, Ser-452, and Ser-509 each carry the phosphoserine modification. A compositionally biased stretch (polar residues) spans 449 to 463 (RSASSSWLEGTSTQA). A compositionally biased stretch (basic and acidic residues) spans 537–546 (VRDEESESQR). Positions 547–557 (KARSRLMRQSR) are enriched in basic residues. Phosphothreonine; by CDC42BP and ROCK2 is present on Thr-560. Basic and acidic residues predominate over residues 567–583 (DLKEAEKAAGKAPESEK). A phosphoserine mark is found at Ser-604 and Ser-647. The segment covering 670 to 680 (PEPEPESEEPD) has biased composition (acidic residues). Positions 681 to 782 (GGFRTLYAEL…LIRVISKLSK (102 aa)) form a coiled coil.

As to quaternary structure, PP1 comprises a catalytic subunit, PPP1CA, PPP1CB or PPP1CC, and one or several targeting or regulatory subunits. PPP1R12C mediates binding to myosin. Interacts via its N-terminus with PPP1CB. Interacts with IL16. Interacts with the coiled-coil domain of MPRIP. Interacts with NOD2. Post-translationally, phosphorylation at Thr-560 is essential for its interaction with PPP1CB. As to expression, ubiquitously expressed. Highly expressed in heart.

It localises to the cytoplasm. The protein resides in the cytoskeleton. It is found in the stress fiber. Functionally, regulates myosin phosphatase activity. This chain is Protein phosphatase 1 regulatory subunit 12C, found in Homo sapiens (Human).